We begin with the raw amino-acid sequence, 510 residues long: NAD(P)H-quinone oxidoreductase subunit 2 A, chloroplastic (510 aa).

Transmembrane regions (helical) follow at residues 24 to 44 (LLLFNGSFIFPECILIFGLIL), 59 to 79 (WFYFISSTCLVISITALLFRW), 99 to 119 (IFQFLILLCSTLCIPLSVEYI), 124 to 144 (MAITEFLLFVLTATLGGMFLC), 149 to 169 (LITIFVAPECFSLCSYLLSGY), 183 to 203 (YLLMGGAGSSILVHGFSWLYG), 229 to 249 (ISLALISITVGLGFKLSPAPF), 295 to 315 (WHLLLEILAILSMILGNLLAI), 323 to 343 (MLAYSSIGQIGYVIIGIIVGD), 354 to 374 (YMLFYISMNLGTFACIVLFGL), 395 to 415 (ALSLALCLLSLGGLPPLAGFF), and 418 to 438 (LYLFWCGWQAGLYFLVSIGLL).

The protein belongs to the complex I subunit 2 family. NDH is composed of at least 16 different subunits, 5 of which are encoded in the nucleus.

It localises to the plastid. The protein localises to the chloroplast thylakoid membrane. The catalysed reaction is a plastoquinone + NADH + (n+1) H(+)(in) = a plastoquinol + NAD(+) + n H(+)(out). It carries out the reaction a plastoquinone + NADPH + (n+1) H(+)(in) = a plastoquinol + NADP(+) + n H(+)(out). Functionally, NDH shuttles electrons from NAD(P)H:plastoquinone, via FMN and iron-sulfur (Fe-S) centers, to quinones in the photosynthetic chain and possibly in a chloroplast respiratory chain. The immediate electron acceptor for the enzyme in this species is believed to be plastoquinone. Couples the redox reaction to proton translocation, and thus conserves the redox energy in a proton gradient. This chain is NAD(P)H-quinone oxidoreductase subunit 2 A, chloroplastic, found in Triticum aestivum (Wheat).